Consider the following 428-residue polypeptide: MNVDFGNALAAEAVTGVSEASLERLDDRVADAHDRIEANIEARRFGYASLALPTDTDPDAIYEAVSGFDPEAVLTVGIGGSALGAETITAALGAESHYTLDNVDPAPTRQLLDELPLSSTLVNVVSRSGTTAETLANFLVVREAMADAGVDWTDRTVVTTGAEGPLRTLADAHDLPSCTVPEGVPGRFSALSAVGLLPAAALGCDIEAVLAGGAAGRESLAPSLFESPAYAYGAVAYATEQRGATTNAIVPYAEQLEPFAEWFAQLWAESLGKDGLGQTPARALGATDQHSQLQLYRAGRKDKLVTLVRPRERAGVDIPETDIDALSYLGGESLESLLDAEFEATEASLAAAGQPNVRIELDSLDAHGVGELLYGMEAACILYGELLGIETFTQPAVEWGKRAARGLLGGGDFEEAEAVADKTVRRVE.

Glu-269 acts as the Proton donor in catalysis. Catalysis depends on residues His-290 and Lys-401.

This sequence belongs to the GPI family.

Its subcellular location is the cytoplasm. The catalysed reaction is alpha-D-glucose 6-phosphate = beta-D-fructose 6-phosphate. It functions in the pathway carbohydrate biosynthesis; gluconeogenesis. It participates in carbohydrate degradation; glycolysis; D-glyceraldehyde 3-phosphate and glycerone phosphate from D-glucose: step 2/4. In terms of biological role, catalyzes the reversible isomerization of glucose-6-phosphate to fructose-6-phosphate. This is Probable glucose-6-phosphate isomerase from Natronomonas pharaonis (strain ATCC 35678 / DSM 2160 / CIP 103997 / JCM 8858 / NBRC 14720 / NCIMB 2260 / Gabara) (Halobacterium pharaonis).